Reading from the N-terminus, the 96-residue chain is UPF0235 protein YggU (96 aa).

Belongs to the UPF0235 family.

The sequence is that of UPF0235 protein YggU from Shigella flexneri.